A 354-amino-acid chain; its full sequence is MLASSAVFRRQEFLIRCLGVGGQSQQFYRKSIPRTMALEADAENILRAITPTLDLARHKGQAGKIAVIGGCREYTGAPYFSAISALKIGADLSHVFCTKDAAPVIKSYSPELIVHPLLEESYSVREEDKKAISEKVLTEVVKWMERFDCLVVGPGLGRDPFLLGCVSEIMKHARQSNVPIVIDGDGLFLVTNSLDLVSGYPLAVLTPNVNEYKRLVQKVLNCEVGDQDAAEQLLSLAKGIGGVTILRKGKSDLISDGETVNSVGIYGSPRRCGGQGDILSGSVAVFLSWARQRIIAEGDLNISPKSPTVLGSIAGSALMRKAASLAFENKKRSTLTGDIIECLGRSLEDICPAK.

The region spanning 42 to 350 is the YjeF C-terminal domain; that stretch reads AENILRAITP…ECLGRSLEDI (309 aa). (6S)-NADPHX contacts are provided by residues Gly155 and 208–214; that span reads NVNEYKR. ATP contacts are provided by residues 248 to 252 and 267 to 276; these read KGKSD and GSPRRCGGQG. Asp277 contributes to the (6S)-NADPHX binding site.

Belongs to the NnrD/CARKD family. Mg(2+) is required as a cofactor.

The catalysed reaction is (6S)-NADHX + ATP = ADP + phosphate + NADH + H(+). It carries out the reaction (6S)-NADPHX + ATP = ADP + phosphate + NADPH + H(+). Functionally, catalyzes the dehydration of the S-form of NAD(P)HX at the expense of ATP, which is converted to ADP. Together with NAD(P)HX epimerase, which catalyzes the epimerization of the S- and R-forms, the enzyme allows the repair of both epimers of NAD(P)HX, a damaged form of NAD(P)H that is a result of enzymatic or heat-dependent hydration. This chain is ATP-dependent (S)-NAD(P)H-hydrate dehydratase, found in Vitis vinifera (Grape).